A 92-amino-acid polypeptide reads, in one-letter code: UPF0237 protein MM_0082 (92 aa).

The ACT domain maps to 7–81 (IITVIGSDRV…KSLGVEVKVQ (75 aa)).

It belongs to the UPF0237 family.

This chain is UPF0237 protein MM_0082, found in Methanosarcina mazei (strain ATCC BAA-159 / DSM 3647 / Goe1 / Go1 / JCM 11833 / OCM 88) (Methanosarcina frisia).